Consider the following 364-residue polypeptide: Probable dual-specificity RNA methyltransferase RlmN (364 aa).

The Proton acceptor role is filled by Glu106. The Radical SAM core domain occupies 112 to 350 (YPQRNTVCIS…SCTVRDTRGR (239 aa)). A disulfide bridge connects residues Cys119 and Cys356. Positions 126, 130, and 133 each coordinate [4Fe-4S] cluster. S-adenosyl-L-methionine contacts are provided by residues 177 to 178 (GE), Ser211, 234 to 236 (SLH), and Asn313. The active-site S-methylcysteine intermediate is the Cys356.

The protein belongs to the radical SAM superfamily. RlmN family. [4Fe-4S] cluster serves as cofactor.

The protein localises to the cytoplasm. It carries out the reaction adenosine(2503) in 23S rRNA + 2 reduced [2Fe-2S]-[ferredoxin] + 2 S-adenosyl-L-methionine = 2-methyladenosine(2503) in 23S rRNA + 5'-deoxyadenosine + L-methionine + 2 oxidized [2Fe-2S]-[ferredoxin] + S-adenosyl-L-homocysteine. The enzyme catalyses adenosine(37) in tRNA + 2 reduced [2Fe-2S]-[ferredoxin] + 2 S-adenosyl-L-methionine = 2-methyladenosine(37) in tRNA + 5'-deoxyadenosine + L-methionine + 2 oxidized [2Fe-2S]-[ferredoxin] + S-adenosyl-L-homocysteine. Specifically methylates position 2 of adenine 2503 in 23S rRNA and position 2 of adenine 37 in tRNAs. This chain is Probable dual-specificity RNA methyltransferase RlmN, found in Mycobacterium ulcerans (strain Agy99).